The chain runs to 95 residues: Probable FAD-linked sulfhydryl oxidase OPG072 (95 aa).

Over 1–8 (MNPKHWGR) the chain is Intravirion. The region spanning 1 to 95 (MNPKHWGRAV…AIDVSKVKPL (95 aa)) is the ERV/ALR sulfhydryl oxidase domain. The chain crosses the membrane as a helical span at residues 9–25 (AVWTIIFIVLSQAGLDG). Topologically, residues 26–95 (NIEACKRKLY…AIDVSKVKPL (70 aa)) are virion surface. C43 and C46 are joined by a disulfide.

It belongs to the orthopoxvirus OPG072 family. As to quaternary structure, interacts with OPG128; this interaction involves formation of a transient disulfide-bonded intermediate, allowing disulfide bond transfer. Requires FAD as cofactor.

The protein localises to the virion membrane. It localises to the host cytoplasm. The enzyme catalyses 2 R'C(R)SH + O2 = R'C(R)S-S(R)CR' + H2O2. In terms of biological role, FAD-dependent sulfhydryl oxidase that catalyzes disulfide bond formation. The complete pathway for formation of disulfide bonds in intracellular virion membrane proteins sequentially involves thiol-disulfide transfer between OPG072, OPG128 and OPG088. This chain is Probable FAD-linked sulfhydryl oxidase OPG072 (OPG072), found in Vaccinia virus (strain Copenhagen) (VACV).